Consider the following 430-residue polypeptide: Adenylosuccinate synthetase (430 aa).

Residues 12–18 (GDEGKGK) and 40–42 (GHT) contribute to the GTP site. Catalysis depends on aspartate 13, which acts as the Proton acceptor. Residues aspartate 13 and glycine 40 each contribute to the Mg(2+) site. IMP is bound by residues 13 to 16 (DEGK), 38 to 41 (NAGH), threonine 130, arginine 144, glutamine 224, and threonine 239. Histidine 41 functions as the Proton donor in the catalytic mechanism. The disordered stretch occupies residues 277–298 (PFPTEQDNETGRKIGERGREFG). Basic and acidic residues predominate over residues 285-296 (ETGRKIGERGRE). A substrate-binding site is contributed by 299 to 305 (TNTGRPR). Residue arginine 303 coordinates IMP. GTP contacts are provided by residues arginine 305, 331–333 (KLD), and 413–415 (STS).

This sequence belongs to the adenylosuccinate synthetase family. In terms of assembly, homodimer. Requires Mg(2+) as cofactor.

It is found in the cytoplasm. The enzyme catalyses IMP + L-aspartate + GTP = N(6)-(1,2-dicarboxyethyl)-AMP + GDP + phosphate + 2 H(+). It functions in the pathway purine metabolism; AMP biosynthesis via de novo pathway; AMP from IMP: step 1/2. Functionally, plays an important role in the de novo pathway of purine nucleotide biosynthesis. Catalyzes the first committed step in the biosynthesis of AMP from IMP. The protein is Adenylosuccinate synthetase of Bradyrhizobium sp. (strain BTAi1 / ATCC BAA-1182).